The following is a 94-amino-acid chain: Acylphosphatase (94 aa).

An Acylphosphatase-like domain is found at 8–94 (RLTAWVHGRV…REQITGFHER (87 aa)). Catalysis depends on residues R23 and N41.

The protein belongs to the acylphosphatase family.

It catalyses the reaction an acyl phosphate + H2O = a carboxylate + phosphate + H(+). This is Acylphosphatase (acyP) from Mycobacterium sp. (strain KMS).